The sequence spans 172 residues: Capsid protein (172 aa).

Positions Met1–Pro23 are disordered. The span at Gly9–Tyr20 shows a compositional bias: basic residues.

It belongs to the nanoviridae capsid protein family.

It is found in the virion. The chain is Capsid protein (DNA-S) from Milk vetch dwarf virus (isolate 9) (MDV).